A 465-amino-acid chain; its full sequence is Cysteine--tRNA ligase (465 aa).

Residue cysteine 29 coordinates Zn(2+). Residues 31-41 carry the 'HIGH' region motif; it reads PTVYNYIHIGN. Cysteine 209, histidine 234, and glutamate 238 together coordinate Zn(2+). Residues 266 to 270 carry the 'KMSKS' region motif; sequence KMSKS. Lysine 269 is a binding site for ATP. Serine 270 bears the Phosphoserine mark.

Belongs to the class-I aminoacyl-tRNA synthetase family. Monomer. The cofactor is Zn(2+).

The protein localises to the cytoplasm. The catalysed reaction is tRNA(Cys) + L-cysteine + ATP = L-cysteinyl-tRNA(Cys) + AMP + diphosphate. This chain is Cysteine--tRNA ligase, found in Bacillus cereus (strain AH187).